Reading from the N-terminus, the 406-residue chain is Phosphopentomutase (406 aa).

Mn(2+) is bound by residues D10, D305, H310, D346, H347, and H358.

The protein belongs to the phosphopentomutase family. Mn(2+) serves as cofactor.

Its subcellular location is the cytoplasm. The catalysed reaction is 2-deoxy-alpha-D-ribose 1-phosphate = 2-deoxy-D-ribose 5-phosphate. It carries out the reaction alpha-D-ribose 1-phosphate = D-ribose 5-phosphate. It functions in the pathway carbohydrate degradation; 2-deoxy-D-ribose 1-phosphate degradation; D-glyceraldehyde 3-phosphate and acetaldehyde from 2-deoxy-alpha-D-ribose 1-phosphate: step 1/2. In terms of biological role, isomerase that catalyzes the conversion of deoxy-ribose 1-phosphate (dRib-1-P) and ribose 1-phosphate (Rib-1-P) to deoxy-ribose 5-phosphate (dRib-5-P) and ribose 5-phosphate (Rib-5-P), respectively. The chain is Phosphopentomutase from Methylobacterium radiotolerans (strain ATCC 27329 / DSM 1819 / JCM 2831 / NBRC 15690 / NCIMB 10815 / 0-1).